The chain runs to 267 residues: V-type proton ATPase subunit D (267 aa).

The protein belongs to the V-ATPase D subunit family. In terms of assembly, V-ATPase is a heteromultimeric enzyme composed of a peripheral catalytic V1 complex (components A to H) attached to an integral membrane V0 proton pore complex (components: a, c, c', c'', d, e, f and VOA1).

The protein localises to the vacuole membrane. Functionally, subunit of the V1 complex of vacuolar(H+)-ATPase (V-ATPase), a multisubunit enzyme composed of a peripheral complex (V1) that hydrolyzes ATP and a membrane integral complex (V0) that translocates protons. V-ATPase is responsible for acidifying and maintaining the pH of intracellular compartments. The chain is V-type proton ATPase subunit D (VMA8) from Candida albicans (strain SC5314 / ATCC MYA-2876) (Yeast).